A 284-amino-acid polypeptide reads, in one-letter code: WUSCHEL-related homeobox 10 (284 aa).

The segment at 1 to 43 (MDRTATASWEVMSRRGEQQQQLMMQAPASHNGGSGGGEPARSR) is disordered. The homeobox; WUS-type DNA-binding region spans 39–103 (PARSRWAPKP…NRRSRSRRRA (65 aa)).

It belongs to the WUS homeobox family.

The protein resides in the nucleus. Functionally, transcription factor which may be involved in developmental processes. The protein is WUSCHEL-related homeobox 10 (WOX10) of Oryza sativa subsp. japonica (Rice).